Reading from the N-terminus, the 968-residue chain is Angiomotin-like protein 1 (968 aa).

2 stretches are compositionally biased toward polar residues: residues 152–164 (VYQSARQEPQGQE) and 177–187 (RSTQPQQNNEE). Positions 152–258 (VYQSARQEPQ…NRANSGQAHK (107 aa)) are disordered. Over residues 203–224 (GQQQQQQQQQQQQQQQQQQGQG) the composition is skewed to low complexity. Serine 253, serine 281, and serine 307 each carry phosphoserine. A coiled-coil region spans residues 271-291 (RSLSERIMQLSLERNGAKQHL). Residues 285 to 343 (NGAKQHLPSSGNGKSFKAGGEPSPAQPVCKALDPRGPPPEYPFKTKPMKSPVSKNQDHG) are disordered. Coiled coils occupy residues 449 to 645 (VERA…RRLR) and 676 to 705 (ALMELVREKEERILALEADMTKWEQKYLEE). The interval 721–742 (AERDTTISNHSRNGSYGESSLE) is disordered. Polar residues predominate over residues 726–738 (TISNHSRNGSYGE). Position 731 is a phosphoserine (serine 731). The stretch at 748-773 (EEEEVVQANRRCQDMEYTIKNLHAKI) forms a coiled coil. The interval 785-834 (QRSRKDAGKTDSASLRPARSVPSIAAATGTHSRQTSLTSSQLTEEKKEEK) is disordered. Phosphoserine is present on residues serine 804, serine 816, and serine 840. Over residues 853 to 878 (ASAPLLPTTPASALSLPASTTSASST) the composition is skewed to low complexity. Positions 853–956 (ASAPLLPTTP…GRVSNLLHKP (104 aa)) are disordered. A phosphoserine mark is found at serine 912 and serine 918. The PDZ-binding motif lies at 965–968 (EVLI).

Belongs to the angiomotin family. Polyubiquitinated by NEDD4, leading to proteasomal degradation. As to expression, expressed in exocrine glands, including pancreas, submandibular gland, lacrimal gland, parotid gland and sublingual gland (at protein level).

It localises to the cell junction. The protein localises to the tight junction. Functionally, inhibits the Wnt/beta-catenin signaling pathway, probably by recruiting CTNNB1 to recycling endosomes and hence preventing its translocation to the nucleus. This chain is Angiomotin-like protein 1 (Amotl1), found in Mus musculus (Mouse).